The chain runs to 101 residues: Urease subunit beta (101 aa).

Belongs to the urease beta subunit family. In terms of assembly, heterotrimer of UreA (gamma), UreB (beta) and UreC (alpha) subunits. Three heterotrimers associate to form the active enzyme.

It localises to the cytoplasm. The catalysed reaction is urea + 2 H2O + H(+) = hydrogencarbonate + 2 NH4(+). Its pathway is nitrogen metabolism; urea degradation; CO(2) and NH(3) from urea (urease route): step 1/1. This chain is Urease subunit beta, found in Actinobacillus pleuropneumoniae serotype 7 (strain AP76).